The primary structure comprises 97 residues: Sec-independent protein translocase protein TatA (97 aa).

The chain crosses the membrane as a helical span at residues 1-21 (MGFNIWSLLIILLIVALLFGT). The tract at residues 28-97 (GGDLGGAIRG…SAEHHDRSTS (70 aa)) is disordered. Residues 37-56 (GFKESMREGEEEEAQKRADG) are compositionally biased toward basic and acidic residues. A compositionally biased stretch (low complexity) spans 78-87 (QARESSSARQ). A compositionally biased stretch (basic and acidic residues) spans 88–97 (SAEHHDRSTS).

Belongs to the TatA/E family. The Tat system comprises two distinct complexes: a TatABC complex, containing multiple copies of TatA, TatB and TatC subunits, and a separate TatA complex, containing only TatA subunits. Substrates initially bind to the TatABC complex, which probably triggers association of the separate TatA complex to form the active translocon.

Its subcellular location is the cell inner membrane. Its function is as follows. Part of the twin-arginine translocation (Tat) system that transports large folded proteins containing a characteristic twin-arginine motif in their signal peptide across membranes. TatA could form the protein-conducting channel of the Tat system. This is Sec-independent protein translocase protein TatA from Halorhodospira halophila (strain DSM 244 / SL1) (Ectothiorhodospira halophila (strain DSM 244 / SL1)).